The chain runs to 103 residues: Large ribosomal subunit protein bL21 (103 aa).

Belongs to the bacterial ribosomal protein bL21 family. As to quaternary structure, part of the 50S ribosomal subunit. Contacts protein L20.

Functionally, this protein binds to 23S rRNA in the presence of protein L20. The protein is Large ribosomal subunit protein bL21 of Wigglesworthia glossinidia brevipalpis.